The following is a 360-amino-acid chain: RGG repeats nuclear RNA binding protein B (360 aa).

Disordered stretches follow at residues 1–216 and 250–360; these read MASV…DKEM and MQQL…TLGK. The residue at position 2 (A2) is an N-acetylalanine. Gly residues predominate over residues 58–77; the sequence is PGGGRGAGRGGSYGRGGRGG. 2 stretches are compositionally biased toward basic and acidic residues: residues 99–108 and 132–157; these read RRSEEGDGAR and DSER…RDGA. Polar residues predominate over residues 162–176; that stretch reads WGTTQDDITPVTEES. Basic and acidic residues-rich tracts occupy residues 184–216, 258–283, and 311–336; these read LTVE…DKEM, SNND…EKTR, and REGR…RNQR. One can recognise an FF domain in the interval 223–288; that stretch reads KVLEEKKKAL…EEKTRKSLSI (66 aa). Phosphoserine is present on S258.

The protein belongs to the SERBP1-HABP4 family.

It localises to the nucleus. Its subcellular location is the cytoplasm. The protein localises to the perinuclear region. Ribosome-binding protein that acts as a regulator of mRNA translation by promoting ribosome inactivation. Binds RNA. This Arabidopsis thaliana (Mouse-ear cress) protein is RGG repeats nuclear RNA binding protein B.